Here is a 96-residue protein sequence, read N- to C-terminus: Protein CLAVATA 3 (96 aa).

The first 21 residues, 1 to 21, serve as a signal peptide directing secretion; the sequence is MDSKSFLLLLLLFCFLFLHDA. Residues 68–96 form a disordered region; that stretch reads ELRTVPSGPDPLHHHVNPPRQPRNNFQLP. Hydroxyproline is present on residues Pro73 and Pro76. Residue Pro76 is glycosylated (O-linked (Ara...) hydroxyproline).

This sequence belongs to the CLV3/ESR signal peptide family. In terms of assembly, interacts with the extracellular leucine-rich repeat region of CLV1. Interacts with CLV2. CLV3-derived CLE peptides interacts with a tetrameric complex made of two CLV2/CRN heterodimers. Post-translationally, the MCLV3 peptide contains two hydroxyprolines, but hydroxylation had no direct effect on MCLV3 activity. The O-glycosylation (arabinosylation) of the hydroxyproline P-76 enhances binding affinity of the MCLV3 peptide for its receptor. First detected in heart stage embryos in a patch of cells between the developing cotyledons. In vegetative and inflorescence meristems, expressed in a small cone of cells at the meristem apex.

Its subcellular location is the secreted. It is found in the extracellular space. Functionally, extracellular signal that regulates meristem maintenance. Acts with CLV1 as a ligand-receptor pair in a signal transduction pathway coordinating growth between adjacent meristematic regions and controlling the balance between meristem cell proliferation and differentiation. In terms of biological role, the secreted peptide MCLV3 activates a signal transduction cascade to restrict WUSCHEL (WUS) expression, inducing shoot and root meristem consumption as cells differentiated into other organs. The polypeptide is Protein CLAVATA 3 (Arabidopsis thaliana (Mouse-ear cress)).